The following is a 522-amino-acid chain: Maturase K (522 aa).

The protein belongs to the intron maturase 2 family. MatK subfamily.

The protein resides in the plastid. It is found in the chloroplast. In terms of biological role, usually encoded in the trnK tRNA gene intron. Probably assists in splicing its own and other chloroplast group II introns. The sequence is that of Maturase K from Watsonia angusta.